Here is a 382-residue protein sequence, read N- to C-terminus: Na(+)/H(+) antiporter NhaA (382 aa).

11 consecutive transmembrane segments (helical) span residues 14-34 (AGGILLVIAAAIAMVIANSAM), 47-67 (FGMSVSHWINDGLMAVFFLLI), 87-107 (IFPAIAAVGGMLAPALIYVAF), 117-137 (GWAIPAATDIAFALGIMALLG), 146-166 (VFLLALAIIDDLGVVVIIALF), 171-191 (LSTIALTIGFIMTGVLFMLNA), 205-225 (LILWIAVLKSGVHATLAGVVI), 247-267 (ALHPYVAFAILPVFAFANAGI), 271-291 (GVSLAGLTSMLPLGVALGLFL), 321-341 (IFAVSVLCGIGFTMSIFISSL), and 353-373 (YARLGILMGSTTAALLGYSLL).

The protein belongs to the NhaA Na(+)/H(+) (TC 2.A.33) antiporter family.

It localises to the cell inner membrane. It carries out the reaction Na(+)(in) + 2 H(+)(out) = Na(+)(out) + 2 H(+)(in). Functionally, na(+)/H(+) antiporter that extrudes sodium in exchange for external protons. The protein is Na(+)/H(+) antiporter NhaA of Vibrio cholerae serotype O1 (strain ATCC 39541 / Classical Ogawa 395 / O395).